A 101-amino-acid chain; its full sequence is Protein PrgJ (101 aa).

It to S.flexneri MxiI.

Functionally, required for invasion of epithelial cells. This is Protein PrgJ (prgJ) from Salmonella typhimurium (strain LT2 / SGSC1412 / ATCC 700720).